Reading from the N-terminus, the 156-residue chain is Ribosomal RNA large subunit methyltransferase H (156 aa).

Residues Leu73, Gly104, and 123-128 (IGPLTL) contribute to the S-adenosyl-L-methionine site.

This sequence belongs to the RNA methyltransferase RlmH family. As to quaternary structure, homodimer.

The protein resides in the cytoplasm. It carries out the reaction pseudouridine(1915) in 23S rRNA + S-adenosyl-L-methionine = N(3)-methylpseudouridine(1915) in 23S rRNA + S-adenosyl-L-homocysteine + H(+). In terms of biological role, specifically methylates the pseudouridine at position 1915 (m3Psi1915) in 23S rRNA. The chain is Ribosomal RNA large subunit methyltransferase H from Xanthomonas axonopodis pv. citri (strain 306).